We begin with the raw amino-acid sequence, 61 residues long: Small ribosomal subunit protein uS14 (61 aa).

Positions 24, 27, 40, and 43 each coordinate Zn(2+).

It belongs to the universal ribosomal protein uS14 family. Zinc-binding uS14 subfamily. As to quaternary structure, part of the 30S ribosomal subunit. Contacts proteins S3 and S10. Requires Zn(2+) as cofactor.

In terms of biological role, binds 16S rRNA, required for the assembly of 30S particles and may also be responsible for determining the conformation of the 16S rRNA at the A site. The sequence is that of Small ribosomal subunit protein uS14 from Treponema denticola (strain ATCC 35405 / DSM 14222 / CIP 103919 / JCM 8153 / KCTC 15104).